Here is a 303-residue protein sequence, read N- to C-terminus: D-alanine--D-alanine ligase (303 aa).

An ATP-grasp domain is found at 99 to 293 (TYRFLKGTVE…FEELVEIILK (195 aa)). Residue 125-176 (GYPCVVKPRREGSSIGVFVCESDEEFQHALKEDLPRYGSVIVQKYIPGREMT) participates in ATP binding. Residues D248, E260, and N262 each coordinate Mg(2+).

This sequence belongs to the D-alanine--D-alanine ligase family. It depends on Mg(2+) as a cofactor. The cofactor is Mn(2+).

It localises to the cytoplasm. The catalysed reaction is 2 D-alanine + ATP = D-alanyl-D-alanine + ADP + phosphate + H(+). The protein operates within cell wall biogenesis; peptidoglycan biosynthesis. In terms of biological role, cell wall formation. In Thermotoga maritima (strain ATCC 43589 / DSM 3109 / JCM 10099 / NBRC 100826 / MSB8), this protein is D-alanine--D-alanine ligase.